Consider the following 104-residue polypeptide: Large ribosomal subunit protein uL24 (104 aa).

It belongs to the universal ribosomal protein uL24 family. Part of the 50S ribosomal subunit.

In terms of biological role, one of two assembly initiator proteins, it binds directly to the 5'-end of the 23S rRNA, where it nucleates assembly of the 50S subunit. One of the proteins that surrounds the polypeptide exit tunnel on the outside of the subunit. The chain is Large ribosomal subunit protein uL24 from Corynebacterium kroppenstedtii (strain DSM 44385 / JCM 11950 / CIP 105744 / CCUG 35717).